Here is a 173-residue protein sequence, read N- to C-terminus: Probable DNA-directed RNA polymerase subunit delta (173 aa).

One can recognise an HTH HARE-type domain in the interval 14–81 (NSFIDLAYMA…GEYMWGLRDW (68 aa)). The interval 113–173 (LLGEDEVEDE…DEFDDEEEEE (61 aa)) is disordered. Residues 115–173 (GEDEVEDELDLLPSDGDEENVDTEDEEVEDELDEAGLVVEPDEEFEDEEDEFDDEEEEE) are compositionally biased toward acidic residues.

This sequence belongs to the RpoE family. RNAP is composed of a core of 2 alpha, a beta and a beta' subunits. The core is associated with a delta subunit and one of several sigma factors.

Its function is as follows. Participates in both the initiation and recycling phases of transcription. In the presence of the delta subunit, RNAP displays an increased specificity of transcription, a decreased affinity for nucleic acids, and an increased efficiency of RNA synthesis because of enhanced recycling. The polypeptide is Probable DNA-directed RNA polymerase subunit delta (Macrococcus caseolyticus (strain JCSC5402) (Macrococcoides caseolyticum)).